The following is a 244-amino-acid chain: Cyclin-Q (244 aa).

The protein belongs to the cyclin family. Cyclin-like FAM58 subfamily.

In terms of biological role, may be an activating cyclin for the cyclin-associated kinase CDK10. The sequence is that of Cyclin-Q (ccnq) from Xenopus laevis (African clawed frog).